A 478-amino-acid polypeptide reads, in one-letter code: Glycogen synthase (478 aa).

ADP-alpha-D-glucose is bound at residue Lys-20.

The protein belongs to the glycosyltransferase 1 family. Bacterial/plant glycogen synthase subfamily.

It carries out the reaction [(1-&gt;4)-alpha-D-glucosyl](n) + ADP-alpha-D-glucose = [(1-&gt;4)-alpha-D-glucosyl](n+1) + ADP + H(+). It functions in the pathway glycan biosynthesis; glycogen biosynthesis. In terms of biological role, synthesizes alpha-1,4-glucan chains using ADP-glucose. The sequence is that of Glycogen synthase from Cereibacter sphaeroides (strain ATCC 17023 / DSM 158 / JCM 6121 / CCUG 31486 / LMG 2827 / NBRC 12203 / NCIMB 8253 / ATH 2.4.1.) (Rhodobacter sphaeroides).